We begin with the raw amino-acid sequence, 377 residues long: NIF3-like protein 1 (377 aa).

Lys109 carries the N6-acetyllysine modification. The segment at 244-377 (LLLHTGMGRL…ETDRDPLQVV (134 aa)) is mediates interaction with COPS2. Thr255 carries the post-translational modification Phosphothreonine. At Ser259 the chain carries Phosphoserine.

This sequence belongs to the GTP cyclohydrolase I type 2/NIF3 family. In terms of assembly, homodimer. Interacts with COPS2. Interacts with THOC7.

It is found in the cytoplasm. The protein localises to the nucleus. In terms of biological role, may function as a transcriptional corepressor through its interaction with COPS2, negatively regulating the expression of genes involved in neuronal differentiation. The chain is NIF3-like protein 1 from Homo sapiens (Human).